A 79-amino-acid polypeptide reads, in one-letter code: Sulfur carrier protein TusA (79 aa).

Cys-17 functions as the Cysteine persulfide intermediate in the catalytic mechanism.

The protein belongs to the sulfur carrier protein TusA family.

The protein resides in the cytoplasm. Functionally, sulfur carrier protein which probably makes part of a sulfur-relay system. The protein is Sulfur carrier protein TusA of Histophilus somni (strain 129Pt) (Haemophilus somnus).